Reading from the N-terminus, the 309-residue chain is Methionyl-tRNA formyltransferase (309 aa).

Residue 112–115 (SLLP) coordinates (6S)-5,6,7,8-tetrahydrofolate.

This sequence belongs to the Fmt family.

It catalyses the reaction L-methionyl-tRNA(fMet) + (6R)-10-formyltetrahydrofolate = N-formyl-L-methionyl-tRNA(fMet) + (6S)-5,6,7,8-tetrahydrofolate + H(+). Functionally, attaches a formyl group to the free amino group of methionyl-tRNA(fMet). The formyl group appears to play a dual role in the initiator identity of N-formylmethionyl-tRNA by promoting its recognition by IF2 and preventing the misappropriation of this tRNA by the elongation apparatus. The polypeptide is Methionyl-tRNA formyltransferase (Bartonella quintana (strain Toulouse) (Rochalimaea quintana)).